The sequence spans 237 residues: Uridylate kinase (237 aa).

ATP is bound at residue 9–12 (KFSG). The interval 17-22 (GEAGYG) is involved in allosteric activation by GTP. UMP is bound at residue Gly51. Residues Gly52 and Arg56 each contribute to the ATP site. UMP is bound by residues Asp72 and 133–140 (TGNPFFTT). Positions 160, 166, and 169 each coordinate ATP.

It belongs to the UMP kinase family. In terms of assembly, homohexamer.

Its subcellular location is the cytoplasm. It catalyses the reaction UMP + ATP = UDP + ADP. It participates in pyrimidine metabolism; CTP biosynthesis via de novo pathway; UDP from UMP (UMPK route): step 1/1. Allosterically activated by GTP. Inhibited by UTP. Its function is as follows. Catalyzes the reversible phosphorylation of UMP to UDP. The sequence is that of Uridylate kinase from Sulfurimonas denitrificans (strain ATCC 33889 / DSM 1251) (Thiomicrospira denitrificans (strain ATCC 33889 / DSM 1251)).